The following is a 117-amino-acid chain: Large ribosomal subunit protein uL18 (117 aa).

Belongs to the universal ribosomal protein uL18 family. Part of the 50S ribosomal subunit; part of the 5S rRNA/L5/L18/L25 subcomplex. Contacts the 5S and 23S rRNAs.

In terms of biological role, this is one of the proteins that bind and probably mediate the attachment of the 5S RNA into the large ribosomal subunit, where it forms part of the central protuberance. This Mycoplasma mobile (strain ATCC 43663 / 163K / NCTC 11711) (Mesomycoplasma mobile) protein is Large ribosomal subunit protein uL18.